The sequence spans 106 residues: MAKTSPVVPPIKLSEPTESGNDTTETSGRLKHLFRDQPLIPIGCAATVGAFLFATRAIRRGDSMRANRFFRYRVLAQAATVLAIVGGVFMERKMKQEKRMEQITPK.

The interval 1 to 28 (MAKTSPVVPPIKLSEPTESGNDTTETSG) is disordered. The HIG1 domain occupies 9 to 102 (PPIKLSEPTE…KMKQEKRMEQ (94 aa)). Residues 16–27 (PTESGNDTTETS) show a composition bias toward polar residues. The next 2 helical transmembrane spans lie at 39-58 (LIPI…TRAI) and 73-90 (RVLA…GVFM).

This sequence belongs to the RCF1 family. As to quaternary structure, associates with the respiratory chain complex III/complex IV supercomplex.

It is found in the mitochondrion membrane. In terms of biological role, cytochrome c oxidase subunit which plays a role in assembly of respiratory supercomplexes. The polypeptide is Respiratory supercomplex factor 1, mitochondrial (rcf1) (Schizosaccharomyces japonicus (strain yFS275 / FY16936) (Fission yeast)).